A 218-amino-acid chain; its full sequence is Claudin-5 (218 aa).

Residues methionine 1–glutamate 7 lie on the Cytoplasmic side of the membrane. Residues isoleucine 8–proline 28 traverse the membrane as a helical segment. The Extracellular segment spans residues methionine 29 to arginine 81. The helical transmembrane segment at alanine 82–alanine 102 threads the bilayer. Residues glutamine 103–alanine 123 lie on the Cytoplasmic side of the membrane. The chain crosses the membrane as a helical span at residues leucine 124–valine 144. The Extracellular portion of the chain corresponds to arginine 145–leucine 160. The helical transmembrane segment at glycine 161–valine 181 threads the bilayer. The Cytoplasmic segment spans residues cysteine 182–valine 218. An interactions with TJP1, TJP2 and TJP3 region spans residues tyrosine 217–valine 218.

This sequence belongs to the claudin family. Interacts with MPDZ. Directly interacts with TJP1/ZO-1, TJP2/ZO-2 and TJP3/ZO-3. Widely expressed with highest levels in the lung.

It is found in the cell junction. It localises to the tight junction. The protein localises to the cell membrane. Plays a major role in tight junction-specific obliteration of the intercellular space, through calcium-independent cell-adhesion activity. The chain is Claudin-5 (Cldn5) from Mus musculus (Mouse).